We begin with the raw amino-acid sequence, 89 residues long: Small ribosomal subunit protein uS15 (89 aa).

Belongs to the universal ribosomal protein uS15 family. Part of the 30S ribosomal subunit. Forms a bridge to the 50S subunit in the 70S ribosome, contacting the 23S rRNA.

One of the primary rRNA binding proteins, it binds directly to 16S rRNA where it helps nucleate assembly of the platform of the 30S subunit by binding and bridging several RNA helices of the 16S rRNA. Its function is as follows. Forms an intersubunit bridge (bridge B4) with the 23S rRNA of the 50S subunit in the ribosome. The polypeptide is Small ribosomal subunit protein uS15 (Pseudomonas fluorescens (strain SBW25)).